The primary structure comprises 313 residues: Pre-mRNA-splicing factor 38A (313 aa).

The N-terminal protein interaction domain stretch occupies residues Met-1–Pro-179. The stretch at Glu-172–Asp-201 forms a coiled coil. The tract at residues Ser-182 to Glu-313 is disordered. A compositionally biased stretch (acidic residues) spans Leu-184–Glu-202. The segment covering Lys-203–Arg-224 has biased composition (basic and acidic residues). Basic residues-rich tracts occupy residues Arg-225–Ser-250, His-260–Ser-294, and Lys-302–Glu-313.

Belongs to the PRP38 family. Component of the spliceosome B complex.

Its subcellular location is the nucleus. Functionally, involved in pre-mRNA splicing as a component of the spliceosome. In Danio rerio (Zebrafish), this protein is Pre-mRNA-splicing factor 38A (prpf38a).